The following is a 237-amino-acid chain: Phosphoribosylaminoimidazole-succinocarboxamide synthase (237 aa).

This sequence belongs to the SAICAR synthetase family.

The enzyme catalyses 5-amino-1-(5-phospho-D-ribosyl)imidazole-4-carboxylate + L-aspartate + ATP = (2S)-2-[5-amino-1-(5-phospho-beta-D-ribosyl)imidazole-4-carboxamido]succinate + ADP + phosphate + 2 H(+). It participates in purine metabolism; IMP biosynthesis via de novo pathway; 5-amino-1-(5-phospho-D-ribosyl)imidazole-4-carboxamide from 5-amino-1-(5-phospho-D-ribosyl)imidazole-4-carboxylate: step 1/2. In Erwinia tasmaniensis (strain DSM 17950 / CFBP 7177 / CIP 109463 / NCPPB 4357 / Et1/99), this protein is Phosphoribosylaminoimidazole-succinocarboxamide synthase.